Here is a 445-residue protein sequence, read N- to C-terminus: Na(+)-translocating NADH-quinone reductase subunit A (445 aa).

The protein belongs to the NqrA family. In terms of assembly, composed of six subunits; NqrA, NqrB, NqrC, NqrD, NqrE and NqrF.

The enzyme catalyses a ubiquinone + n Na(+)(in) + NADH + H(+) = a ubiquinol + n Na(+)(out) + NAD(+). Its function is as follows. NQR complex catalyzes the reduction of ubiquinone-1 to ubiquinol by two successive reactions, coupled with the transport of Na(+) ions from the cytoplasm to the periplasm. NqrA to NqrE are probably involved in the second step, the conversion of ubisemiquinone to ubiquinol. The sequence is that of Na(+)-translocating NADH-quinone reductase subunit A from Pseudomonas aeruginosa (strain UCBPP-PA14).